We begin with the raw amino-acid sequence, 855 residues long: Replication factor C small subunit (855 aa).

Positions 185-308 (WLGYFLGGGY…IAYALAGFGI (124 aa)) constitute a DOD-type homing endonuclease domain.

Belongs to the activator 1 small subunits family. RfcS subfamily. As to quaternary structure, heteromultimer composed of small subunits (RfcS) and large subunits (RfcL). Post-translationally, this protein undergoes a protein self splicing that involves a post-translational excision of the intervening region (intein) followed by peptide ligation.

In terms of biological role, part of the RFC clamp loader complex which loads the PCNA sliding clamp onto DNA. This is Replication factor C small subunit (rfcS) from Pyrococcus horikoshii (strain ATCC 700860 / DSM 12428 / JCM 9974 / NBRC 100139 / OT-3).